Reading from the N-terminus, the 130-residue chain is Anti-adapter protein IraD (130 aa).

This sequence belongs to the GpW/Gp25 family. IraD subfamily. In terms of assembly, interacts with RssB.

It is found in the cytoplasm. In terms of biological role, inhibits RpoS proteolysis by regulating RssB activity, thereby increasing the stability of the sigma stress factor RpoS during oxidative stress. Its effect on RpoS stability is due to its interaction with RssB, which probably blocks the interaction of RssB with RpoS, and the consequent delivery of the RssB-RpoS complex to the ClpXP protein degradation pathway. This chain is Anti-adapter protein IraD, found in Escherichia coli O139:H28 (strain E24377A / ETEC).